The primary structure comprises 142 residues: Nucleoside diphosphate kinase (142 aa).

Residues lysine 11, phenylalanine 59, arginine 87, threonine 93, arginine 104, and asparagine 114 each contribute to the ATP site. Residue histidine 117 is the Pros-phosphohistidine intermediate of the active site.

It belongs to the NDK family. As to quaternary structure, homotetramer. Mg(2+) serves as cofactor.

Its subcellular location is the cytoplasm. The enzyme catalyses a 2'-deoxyribonucleoside 5'-diphosphate + ATP = a 2'-deoxyribonucleoside 5'-triphosphate + ADP. The catalysed reaction is a ribonucleoside 5'-diphosphate + ATP = a ribonucleoside 5'-triphosphate + ADP. Major role in the synthesis of nucleoside triphosphates other than ATP. The ATP gamma phosphate is transferred to the NDP beta phosphate via a ping-pong mechanism, using a phosphorylated active-site intermediate. In Aeromonas hydrophila subsp. hydrophila (strain ATCC 7966 / DSM 30187 / BCRC 13018 / CCUG 14551 / JCM 1027 / KCTC 2358 / NCIMB 9240 / NCTC 8049), this protein is Nucleoside diphosphate kinase.